The primary structure comprises 559 residues: MMMQKLRRSGEFIRFGCKSLISSRPNKDSVSRSVSGFVNHYKSKGKLFELSDGNYKTELHHPCISRNVGMLLQQYKCFGSSAASLIQRNPLFSSLDSKDVSYFKEILGEKNVVEDKERLETANTDWMHKYKGSSKLMLLPKNTQEVSQILEYCDSRRLAVVPQGGNTGLVGGSVPVFDEVIVNVGLMNKILSFDEVSGVLVCEAGCILENLATFLDTKGFIMPLDLGAKGSCHIGGNVSTNAGGLRLIRYGSLHGTVLGLEAVTANGNVLDMLGTLRKDNTGYDLKHLFIGSEGSLGIVTKVSILTQPKLSSVNLAFIACKDYLSCQKLLVEAKRNLGEILSAFEFLDNNSMDLVLNHLDGVRNPVSSSENFYILIETTGSDETNDREKLEAFLLKSLEKGLVSDGVIAQDINQASSFWRIREGITEALQKAGAVYKYDLSLPVEEIYNIVNDLRGRLGDLANVMGYGHLGDGNLHLNISAAEYNDKLLGLIEPYVYEWTSKHRGSISAEHGLGVMKANEIFYSKSPETVALMASIKKLLDPKGILNPYKVLPHSLFSN.

A mitochondrion-targeting transit peptide spans 1–78; it reads MMMQKLRRSG…GMLLQQYKCF (78 aa). The FAD-binding PCMH-type domain occupies 130–309; the sequence is YKGSSKLMLL…TKVSILTQPK (180 aa).

The protein belongs to the FAD-binding oxidoreductase/transferase type 4 family. Homodimer. It depends on FAD as a cofactor.

It localises to the mitochondrion. It carries out the reaction (R)-2-hydroxyglutarate + A = 2-oxoglutarate + AH2. In terms of biological role, catalyzes the oxidation of (R)-2-hydroxyglutarate to 2-oxoglutarate. May be involved in the catabolism of propionyl-CoA derived from beta-oxidation. Involved in degradation of lysine for the supply of carbon and electrons to the ETF/ETFQO complex during dark-induced sugar starvation. This chain is D-2-hydroxyglutarate dehydrogenase, mitochondrial (D2HGDH), found in Arabidopsis thaliana (Mouse-ear cress).